The chain runs to 117 residues: Immunoglobulin heavy variable 1-69 (117 aa).

An N-terminal signal peptide occupies residues 1–19; that stretch reads MDWTWRFLFVVAAATGVQS. Pyrrolidone carboxylic acid is present on glutamine 20. The tract at residues 20–44 is framework-1; sequence QVQLVQSGAEVKKPGSSVKVSCKAS. Residues 20-117 form the Ig-like domain; that stretch reads QVQLVQSGAE…EDTAVYYCAR (98 aa). An intrachain disulfide couples cysteine 41 to cysteine 115. A complementarity-determining-1 region spans residues 45 to 52; that stretch reads GGTFSSYA. The segment at 53–69 is framework-2; that stretch reads ISWVRQAPGQGLEWMGG. The interval 70-77 is complementarity-determining-2; it reads IIPIFGTA. The interval 78–115 is framework-3; it reads NYAQKFQGRVTITADKSTSTAYMELSSLRSEDTAVYYC. Residues 116 to 117 are complementarity-determining-3; it reads AR.

In terms of assembly, immunoglobulins are composed of two identical heavy chains and two identical light chains; disulfide-linked.

It localises to the secreted. The protein resides in the cell membrane. Its function is as follows. V region of the variable domain of immunoglobulin heavy chains that participates in the antigen recognition. Immunoglobulins, also known as antibodies, are membrane-bound or secreted glycoproteins produced by B lymphocytes. In the recognition phase of humoral immunity, the membrane-bound immunoglobulins serve as receptors which, upon binding of a specific antigen, trigger the clonal expansion and differentiation of B lymphocytes into immunoglobulins-secreting plasma cells. Secreted immunoglobulins mediate the effector phase of humoral immunity, which results in the elimination of bound antigens. The antigen binding site is formed by the variable domain of one heavy chain, together with that of its associated light chain. Thus, each immunoglobulin has two antigen binding sites with remarkable affinity for a particular antigen. The variable domains are assembled by a process called V-(D)-J rearrangement and can then be subjected to somatic hypermutations which, after exposure to antigen and selection, allow affinity maturation for a particular antigen. The sequence is that of Immunoglobulin heavy variable 1-69 from Homo sapiens (Human).